We begin with the raw amino-acid sequence, 462 residues long: FAD-dependent monooxygenase opaC (462 aa).

Residue Asn10 is glycosylated (N-linked (GlcNAc...) asparagine). Residues 14 to 34 (ITVIIIGLGIGGLTAAISCHL) traverse the membrane as a helical segment. Asp43 serves as a coordination point for FAD. Asn60 carries an N-linked (GlcNAc...) asparagine glycan. FAD is bound at residue Arg115. Arg193 is a catalytic residue. Asp322 and Ala335 together coordinate FAD.

The protein belongs to the paxM FAD-dependent monooxygenase family. Requires FAD as cofactor.

It is found in the membrane. The protein operates within secondary metabolite biosynthesis. FAD-dependent monooxygenase; part of the gene cluster that mediates the biosynthesis of oxepinamides, derivatives of anthranilyl-containing tripeptides that share an oxepin ring and a fused pyrimidinone moiety. The nonribosomal peptide synthetase (NRPS) opaA assembles the quinazolinone core with D-Phe incorporation. The first adenylation domain (A1) of opaA loads and activates anthranilic acid whereas the second A domain (A2) is for activating of L-Phe, which is then converted to D-form by the E domain. The third A domain (A3) is responsible for L-Ile activation and the terminal condensation domain C3 for cyclization and releasing the NRPS product protuboxepin K. The cytochrome P450 monooxygenase opaB then catalyzes alone the oxepin ring formation to convert protuboxepin K into protuboxepin A. The flavoenzyme opaC installs subsequently one hydroxyl group at the oxepin ring, accompanied by double bond migration, to form 15-epi-oxepinamide E. The epimerase opaE changes the D-Phe residue back to L-form, leading to oxepinamide E, which is further methylated at the hydroxyl group at C-12 by the O-methyltransferase OpaF to yield oxepinamide F. In Aspergillus ustus, this protein is FAD-dependent monooxygenase opaC.